The following is a 245-amino-acid chain: TLC domain-containing protein 5 (245 aa).

6 consecutive transmembrane segments (helical) span residues 1–21, 38–58, 75–95, 99–119, 162–182, and 191–211; these read MALA…SLYI, LVTF…GFID, VHVL…CVYF, GALM…ALVL, FLFV…LLFC, and WFVK…MFSI. The TLC domain maps to 29-204; it reads HRSYEWSCRL…AGGVAMYAVS (176 aa).

It belongs to the TLCD5 family.

It localises to the membrane. This chain is TLC domain-containing protein 5, found in Homo sapiens (Human).